The primary structure comprises 433 residues: Protein translocase subunit SecD (433 aa).

6 helical membrane passes run 7–27 (LAFL…GPKI), 257–277 (LIAG…AYRM), 278–298 (AGLI…LTFA), 300–320 (LHVV…GIAV), 354–374 (TIVD…IFGG), and 380–400 (GFAV…VLFA).

The protein belongs to the SecD/SecF family. SecD subfamily. As to quaternary structure, forms a complex with SecF. Part of the essential Sec protein translocation apparatus which comprises SecA, SecYEG and auxiliary proteins SecDF. Other proteins may also be involved.

It localises to the cell membrane. Part of the Sec protein translocase complex. Interacts with the SecYEG preprotein conducting channel. SecDF uses the proton motive force (PMF) to complete protein translocation after the ATP-dependent function of SecA. The polypeptide is Protein translocase subunit SecD (Alicyclobacillus acidocaldarius subsp. acidocaldarius (strain ATCC 27009 / DSM 446 / BCRC 14685 / JCM 5260 / KCTC 1825 / NBRC 15652 / NCIMB 11725 / NRRL B-14509 / 104-IA) (Bacillus acidocaldarius)).